Here is a 772-residue protein sequence, read N- to C-terminus: Calcium-binding mitochondrial carrier protein (772 aa).

The segment at 1–377 is N-terminal domain; the sequence is MFANRVRQAQ…SISDFEKSTG (377 aa). 4 EF-hand domains span residues 132-165, 166-201, 235-270, and 347-382; these read LDAD…ELMA, KPEA…SLDP, LQQE…VKLR, and ITPL…NINK. Residues Asp145, Asp147, Thr149, Tyr151, Glu156, Asp179, Asp181, Asn183, Tyr185, and Asp190 each coordinate Ca(2+). Asp360, Asn362, Asp364, Lys366, and Asp371 together coordinate Ca(2+). Residues 378–422 form a linker loop domain region; that stretch reads LNINKIGGGTNYSDSYPSDSHVTIQNSSTTPSPSTPITNTAAAIA. Residues 432 to 720 are carrier domain; the sequence is AQQVLESIEN…KALLPDAEYK (289 aa). Solcar repeat units lie at residues 436-526, 535-616, and 624-712; these read LESI…LRDL, IYFP…MKTI, and LGPM…LQKA. A run of 6 helical transmembrane segments spans residues 442-459, 501-520, 545-558, 591-610, 630-647, and 687-706; these read FALG…VYPI, GILP…LTVN, GFAG…TNPL, GAGA…FPTY, LLAG…VTPA, and GALA…LVSY. A C-terminal domain region spans residues 721-772; it reads PPTNAPITQKDFDVIRGNTNTVQRVIDMESKFGTLHQTRDNNKSSNGGENKN. The disordered stretch occupies residues 751–772; the sequence is KFGTLHQTRDNNKSSNGGENKN. Residues 763–772 are compositionally biased toward low complexity; that stretch reads KSSNGGENKN.

Belongs to the mitochondrial carrier (TC 2.A.29) family. In terms of assembly, homodimer (via N-terminus).

The protein resides in the mitochondrion inner membrane. Mitochondrial and calcium-binding carrier that catalyzes the calcium-dependent exchange of cytoplasmic glutamate with mitochondrial aspartate across the mitochondrial inner membrane. The protein is Calcium-binding mitochondrial carrier protein (mcfO) of Dictyostelium discoideum (Social amoeba).